Reading from the N-terminus, the 374-residue chain is Queuine tRNA-ribosyltransferase (374 aa).

Asp95 (proton acceptor) is an active-site residue. Residues 95–99, Asp149, Gln191, and Gly218 each bind substrate; that span reads DSGGF. Residues 249-255 are RNA binding; sequence GVGTYRE. Asp268 serves as the catalytic Nucleophile. The RNA binding; important for wobble base 34 recognition stretch occupies residues 273–277; it reads TRWAR. 4 residues coordinate Zn(2+): Cys306, Cys308, Cys311, and His337.

This sequence belongs to the queuine tRNA-ribosyltransferase family. As to quaternary structure, homodimer. Within each dimer, one monomer is responsible for RNA recognition and catalysis, while the other monomer binds to the replacement base PreQ1. Zn(2+) is required as a cofactor.

The enzyme catalyses 7-aminomethyl-7-carbaguanine + guanosine(34) in tRNA = 7-aminomethyl-7-carbaguanosine(34) in tRNA + guanine. The protein operates within tRNA modification; tRNA-queuosine biosynthesis. In terms of biological role, catalyzes the base-exchange of a guanine (G) residue with the queuine precursor 7-aminomethyl-7-deazaguanine (PreQ1) at position 34 (anticodon wobble position) in tRNAs with GU(N) anticodons (tRNA-Asp, -Asn, -His and -Tyr). Catalysis occurs through a double-displacement mechanism. The nucleophile active site attacks the C1' of nucleotide 34 to detach the guanine base from the RNA, forming a covalent enzyme-RNA intermediate. The proton acceptor active site deprotonates the incoming PreQ1, allowing a nucleophilic attack on the C1' of the ribose to form the product. After dissociation, two additional enzymatic reactions on the tRNA convert PreQ1 to queuine (Q), resulting in the hypermodified nucleoside queuosine (7-(((4,5-cis-dihydroxy-2-cyclopenten-1-yl)amino)methyl)-7-deazaguanosine). This is Queuine tRNA-ribosyltransferase from Nostoc sp. (strain PCC 7120 / SAG 25.82 / UTEX 2576).